Reading from the N-terminus, the 224-residue chain is Large ribosomal subunit protein uL1 (224 aa).

Belongs to the universal ribosomal protein uL1 family. Part of the 50S ribosomal subunit.

Its function is as follows. Binds directly to 23S rRNA. The L1 stalk is quite mobile in the ribosome, and is involved in E site tRNA release. In terms of biological role, protein L1 is also a translational repressor protein, it controls the translation of the L11 operon by binding to its mRNA. The sequence is that of Large ribosomal subunit protein uL1 from Borrelia recurrentis (strain A1).